Consider the following 625-residue polypeptide: Transferrin-binding protein B (625 aa).

Residues 1–17 form the signal peptide; it reads MKSVPLISGGLSLFLSA. The N-palmitoyl cysteine moiety is linked to residue C18. C18 carries S-diacylglycerol cysteine lipidation. Disordered regions lie at residues 25-52, 99-125, 275-298, and 584-610; these read FDVD…KKSN, KKEN…QNHH, VKPT…GGFY, and FTYN…KARA. A compositionally biased stretch (basic and acidic residues) spans 276–292; that stretch reads KPTEKDSEEHPFTREGT. The segment covering 587–605 has biased composition (polar residues); it reads NGKNPTDKNSPTASSPSNS.

It belongs to the TbpB family.

It is found in the cell outer membrane. The protein resides in the cell surface. Haemophilus acquires iron by extracting it from serum transferrin (TF) in its human host. Acts as a transferrin receptor and is required for transferrin utilization. In Haemophilus influenzae (strain ATCC 51907 / DSM 11121 / KW20 / Rd), this protein is Transferrin-binding protein B (tbpB).